A 663-amino-acid chain; its full sequence is DNA ligase (663 aa).

NAD(+) is bound by residues 31-35 (DSEYD), 80-81 (SL), and E109. The N6-AMP-lysine intermediate role is filled by K111. The NAD(+) site is built by R132, E166, K282, and K306. C400, C403, C418, and C423 together coordinate Zn(2+). Residues 585-663 (ELHPVFGEKT…EQMMVDALRN (79 aa)) form the BRCT domain.

This sequence belongs to the NAD-dependent DNA ligase family. LigA subfamily. Requires Mg(2+) as cofactor. Mn(2+) is required as a cofactor.

The enzyme catalyses NAD(+) + (deoxyribonucleotide)n-3'-hydroxyl + 5'-phospho-(deoxyribonucleotide)m = (deoxyribonucleotide)n+m + AMP + beta-nicotinamide D-nucleotide.. DNA ligase that catalyzes the formation of phosphodiester linkages between 5'-phosphoryl and 3'-hydroxyl groups in double-stranded DNA using NAD as a coenzyme and as the energy source for the reaction. It is essential for DNA replication and repair of damaged DNA. In Macrococcus caseolyticus (strain JCSC5402) (Macrococcoides caseolyticum), this protein is DNA ligase.